The primary structure comprises 430 residues: Glucose-6-phosphate isomerase (430 aa).

Glutamate 284 serves as the catalytic Proton donor. Active-site residues include histidine 305 and lysine 420.

Belongs to the GPI family.

It is found in the cytoplasm. The enzyme catalyses alpha-D-glucose 6-phosphate = beta-D-fructose 6-phosphate. Its pathway is carbohydrate biosynthesis; gluconeogenesis. It participates in carbohydrate degradation; glycolysis; D-glyceraldehyde 3-phosphate and glycerone phosphate from D-glucose: step 2/4. Its function is as follows. Catalyzes the reversible isomerization of glucose-6-phosphate to fructose-6-phosphate. The sequence is that of Glucose-6-phosphate isomerase from Mycoplasmopsis synoviae (strain 53) (Mycoplasma synoviae).